A 230-amino-acid chain; its full sequence is 7-cyano-7-deazaguanine synthase (230 aa).

Residue 8-18 (LSGGMDSAVVT) coordinates ATP. 4 residues coordinate Zn(2+): C186, C196, C199, and C202.

This sequence belongs to the QueC family. The cofactor is Zn(2+).

The enzyme catalyses 7-carboxy-7-deazaguanine + NH4(+) + ATP = 7-cyano-7-deazaguanine + ADP + phosphate + H2O + H(+). It functions in the pathway purine metabolism; 7-cyano-7-deazaguanine biosynthesis. Catalyzes the ATP-dependent conversion of 7-carboxy-7-deazaguanine (CDG) to 7-cyano-7-deazaguanine (preQ(0)). In Xylella fastidiosa (strain M12), this protein is 7-cyano-7-deazaguanine synthase.